A 411-amino-acid chain; its full sequence is Protein-lysine 6-oxidase (411 aa).

The signal sequence occupies residues 1-21 (MRFAWTVLFLGQLQFCPLLRC). Positions 22-162 (APQAPREPPA…PPSHVDRMVG (141 aa)) are cleaved as a propeptide — removed by BMP1. Residues 60–168 (PQRRRDSSAT…RMVGDDPYNP (109 aa)) are disordered. 2 N-linked (GlcNAc...) asparagine glycosylation sites follow: Asn-91 and Asn-138. The residue at position 181 (Tyr-181) is a Sulfotyrosine. The lysyl-oxidase like stretch occupies residues 207–411 (PDLVPDPYYI…YASGCTISPY (205 aa)). 5 cysteine pairs are disulfide-bonded: Cys-232–Cys-238, Cys-285–Cys-334, Cys-318–Cys-324, Cys-345–Cys-355, and Cys-392–Cys-406. His-286, His-288, and His-290 together coordinate Cu cation. Positions 314–349 (KASFCLEDTSCDYGYHRRFACTAHTQGLSPGCYDTY) form a cross-link, lysine tyrosylquinone (Lys-Tyr). Tyr-349 is modified (2',4',5'-topaquinone).

Belongs to the lysyl oxidase family. As to quaternary structure, interacts with MFAP4. Interacts (via propeptide) with EFEMP2; this interaction is strong and facilitates formation of ternary complexes with ELN during elastic fiber assembly; this interaction limits interaction of EFEMP2 with FBLN5. Cu cation is required as a cofactor. The cofactor is lysine tyrosylquinone residue. The lysine tyrosylquinone cross-link (LTQ) is generated by condensation of the epsilon-amino group of a lysine with a topaquinone produced by oxidation of tyrosine. In terms of processing, proteolytically cleaved by BMP1 which removes the propeptide. Also proteolytically cleaved by ADAMTS2 and ADAMTS14, but not by ADAMTS3, at an additional cleavage site downstream of the BMP1 cleavage site. The propeptide plays a role in directing the deposition of this enzyme to elastic fibers, via interaction with tropoelastin. Cleavage by BMP1 to remove the propeptide does not increase enzymatic activity but increases binding to collagen. Cleavage by ADAMTS2 produces a form with reduced collagen-binding activity. Post-translationally, sulfated at Tyr-181 and also at either Tyr-177 or Tyr-178 which enhances binding to collagen. In terms of tissue distribution, aorta and lung.

The protein resides in the secreted. It is found in the extracellular space. It carries out the reaction L-lysyl-[protein] + O2 + H2O = (S)-2-amino-6-oxohexanoyl-[protein] + H2O2 + NH4(+). Functionally, responsible for the post-translational oxidative deamination of peptidyl lysine residues in precursors to fibrous collagen and elastin. Regulator of Ras expression. May play a role in tumor suppression. Plays a role in the aortic wall architecture. The chain is Protein-lysine 6-oxidase from Rattus norvegicus (Rat).